Here is a 455-residue protein sequence, read N- to C-terminus: Guanine/hypoxanthine permease GhxQ (455 aa).

Over Met1–Val31 the chain is Cytoplasmic. A helical transmembrane segment spans residues Arg32–Met55. The Periplasmic segment spans residues Leu56–Ala65. The chain crosses the membrane as a helical span at residues Val66 to Trp84. Over Ala85–Asn86 the chain is Cytoplasmic. A discontinuously helical transmembrane segment spans residues Leu87 to Phe103. Residues Ser104–Val115 lie on the Periplasmic side of the membrane. The chain crosses the membrane as a helical span at residues Ala116 to Val135. At Arg136–Ile147 the chain is on the cytoplasmic side. The helical transmembrane segment at Ala148–Gly168 threads the bilayer. Topologically, residues Met169–Thr186 are periplasmic. A helical transmembrane segment spans residues Ser187–Glu204. Residues Lys205–Val208 lie on the Cytoplasmic side of the membrane. A helical transmembrane segment spans residues Pro209 to Pro228. At Ala229–Gln260 the chain is on the periplasmic side. A helical transmembrane segment spans residues Pro261–Ala289. Topologically, residues Asn290 to Gly302 are cytoplasmic. The helical transmembrane segment at Lys303–Val318 threads the bilayer. Topologically, residues Gly319–Ala320 are periplasmic. A discontinuously helical transmembrane segment spans residues Ala321–Gly336. Residues Gly337–Gly340 lie on the Cytoplasmic side of the membrane. A helical transmembrane segment spans residues Leu341–Phe355. Residues Leu356–Tyr366 lie on the Periplasmic side of the membrane. Residues Ala367–Leu386 form a helical membrane-spanning segment. Over Asp387–Phe391 the chain is Cytoplasmic. An intramembrane region (discontinuously helical) is located at residues Ile392 to Phe427. Topologically, residues Ala428–Ile455 are cytoplasmic.

Belongs to the nucleobase:cation symporter-2 (NCS2) (TC 2.A.40) family. Azg-like subfamily.

Its subcellular location is the cell membrane. In terms of biological role, high-affinity transporter for guanine and hypoxanthine. The protein is Guanine/hypoxanthine permease GhxQ (ghxQ) of Escherichia coli (strain K12).